A 439-amino-acid polypeptide reads, in one-letter code: Vitellogenin-1 (439 aa).

Positions 1–20 are cleaved as a signal peptide; the sequence is MNPMRVLSLLACLAVAALAK. The span at 158 to 175 shows a compositional bias: polar residues; sequence QQQRQHGKNGNQDYQDQS. 2 disordered regions span residues 158 to 196 and 407 to 439; these read QQQRQHGKNGNQDYQDQSNEQRKNQRTSSEEDYSEEVKN and KSPFGRNAPAQKQSSYHGVHQAWNTNQDSKDYQ. Position 171 is a phosphotyrosine (Tyr-171). A phosphoserine mark is found at Ser-175, Ser-185, and Ser-186. Tyr-190 bears the Phosphotyrosine mark. A Phosphoserine modification is found at Ser-191. Residues 416–433 show a composition bias toward polar residues; that stretch reads AQKQSSYHGVHQAWNTNQ. Ser-435 is subject to Phosphoserine.

Belongs to the AB hydrolase superfamily. Lipase family. Tyrosine sulfation occurs in the female only and plays an essential functional role. As to expression, expressed in females only.

Its subcellular location is the secreted. It localises to the vesicle. Vitellogenin is the major yolk protein of eggs where it is used as a food source during embryogenesis. Along with Yp2 and Yp3, and their receptor yl/yolkless, required for maintenance of microtubule plus-end orientation towards the posterior pole of oocytes. Involved in polarized localization of germ plasm components, such as osk mRNA and vas protein, to the oocyte posterior cortex. Receptor-mediated endocytosis by yl/yolkless is crucial for actin reorganization, mediated by osk isoform A/Long, required to anchor germ plasm components to the oocyte cortex. This is Vitellogenin-1 (Yp1) from Drosophila melanogaster (Fruit fly).